Reading from the N-terminus, the 208-residue chain is Ribosomal RNA small subunit methyltransferase G (208 aa).

S-adenosyl-L-methionine-binding positions include Gly-73, Leu-78, 124–125, and Arg-139; that span reads VE.

The protein belongs to the methyltransferase superfamily. RNA methyltransferase RsmG family.

The protein resides in the cytoplasm. It carries out the reaction guanosine(527) in 16S rRNA + S-adenosyl-L-methionine = N(7)-methylguanosine(527) in 16S rRNA + S-adenosyl-L-homocysteine. In terms of biological role, specifically methylates the N7 position of guanine in position 527 of 16S rRNA. This chain is Ribosomal RNA small subunit methyltransferase G, found in Aeromonas salmonicida (strain A449).